The primary structure comprises 142 residues: Large ribosomal subunit protein uL11 (142 aa).

It belongs to the universal ribosomal protein uL11 family. In terms of assembly, part of the ribosomal stalk of the 50S ribosomal subunit. Interacts with L10 and the large rRNA to form the base of the stalk. L10 forms an elongated spine to which L12 dimers bind in a sequential fashion forming a multimeric L10(L12)X complex. In terms of processing, one or more lysine residues are methylated.

Its function is as follows. Forms part of the ribosomal stalk which helps the ribosome interact with GTP-bound translation factors. This chain is Large ribosomal subunit protein uL11, found in Bartonella tribocorum (strain CIP 105476 / IBS 506).